Here is a 177-residue protein sequence, read N- to C-terminus: Large ribosomal subunit protein uL6 (177 aa).

The protein belongs to the universal ribosomal protein uL6 family. As to quaternary structure, part of the 50S ribosomal subunit.

This protein binds to the 23S rRNA, and is important in its secondary structure. It is located near the subunit interface in the base of the L7/L12 stalk, and near the tRNA binding site of the peptidyltransferase center. This chain is Large ribosomal subunit protein uL6, found in Rickettsia peacockii (strain Rustic).